The primary structure comprises 716 residues: 1,4-alpha-glucan branching enzyme GlgB (716 aa).

The active-site Nucleophile is the aspartate 394. Catalysis depends on glutamate 447, which acts as the Proton donor.

It belongs to the glycosyl hydrolase 13 family. GlgB subfamily. As to quaternary structure, monomer.

The catalysed reaction is Transfers a segment of a (1-&gt;4)-alpha-D-glucan chain to a primary hydroxy group in a similar glucan chain.. Its pathway is glycan biosynthesis; glycogen biosynthesis. In terms of biological role, catalyzes the formation of the alpha-1,6-glucosidic linkages in glycogen by scission of a 1,4-alpha-linked oligosaccharide from growing alpha-1,4-glucan chains and the subsequent attachment of the oligosaccharide to the alpha-1,6 position. The protein is 1,4-alpha-glucan branching enzyme GlgB of Photobacterium profundum (strain SS9).